A 477-amino-acid polypeptide reads, in one-letter code: Bifunctional protein HldE (477 aa).

Residues 1–318 are ribokinase; sequence MQIQLPMFQN…RRAVQQEQGA (318 aa). 195–198 lines the ATP pocket; the sequence is NLSE. Aspartate 264 is an active-site residue. The tract at residues 344–477 is cytidylyltransferase; it reads FTNGCFDIIH…VEKIRKDQVK (134 aa).

In the N-terminal section; belongs to the carbohydrate kinase PfkB family. The protein in the C-terminal section; belongs to the cytidylyltransferase family. In terms of assembly, homodimer.

It catalyses the reaction D-glycero-beta-D-manno-heptose 7-phosphate + ATP = D-glycero-beta-D-manno-heptose 1,7-bisphosphate + ADP + H(+). It carries out the reaction D-glycero-beta-D-manno-heptose 1-phosphate + ATP + H(+) = ADP-D-glycero-beta-D-manno-heptose + diphosphate. It functions in the pathway nucleotide-sugar biosynthesis; ADP-L-glycero-beta-D-manno-heptose biosynthesis; ADP-L-glycero-beta-D-manno-heptose from D-glycero-beta-D-manno-heptose 7-phosphate: step 1/4. The protein operates within nucleotide-sugar biosynthesis; ADP-L-glycero-beta-D-manno-heptose biosynthesis; ADP-L-glycero-beta-D-manno-heptose from D-glycero-beta-D-manno-heptose 7-phosphate: step 3/4. Catalyzes the phosphorylation of D-glycero-D-manno-heptose 7-phosphate at the C-1 position to selectively form D-glycero-beta-D-manno-heptose-1,7-bisphosphate. Functionally, catalyzes the ADP transfer from ATP to D-glycero-beta-D-manno-heptose 1-phosphate, yielding ADP-D-glycero-beta-D-manno-heptose. In Hahella chejuensis (strain KCTC 2396), this protein is Bifunctional protein HldE.